Here is a 176-residue protein sequence, read N- to C-terminus: Adenine phosphoribosyltransferase (176 aa).

This sequence belongs to the purine/pyrimidine phosphoribosyltransferase family. Homodimer.

It is found in the cytoplasm. The catalysed reaction is AMP + diphosphate = 5-phospho-alpha-D-ribose 1-diphosphate + adenine. It participates in purine metabolism; AMP biosynthesis via salvage pathway; AMP from adenine: step 1/1. Catalyzes a salvage reaction resulting in the formation of AMP, that is energically less costly than de novo synthesis. The polypeptide is Adenine phosphoribosyltransferase (Leuconostoc mesenteroides subsp. mesenteroides (strain ATCC 8293 / DSM 20343 / BCRC 11652 / CCM 1803 / JCM 6124 / NCDO 523 / NBRC 100496 / NCIMB 8023 / NCTC 12954 / NRRL B-1118 / 37Y)).